We begin with the raw amino-acid sequence, 356 residues long: Holliday junction branch migration complex subunit RuvB (356 aa).

Residues 13–197 (LPPARRMLSA…FGIVARLEFY (185 aa)) form a large ATPase domain (RuvB-L) region. ATP-binding positions include Leu-36, Arg-37, Gly-78, Lys-81, Thr-82, Thr-83, 144 to 146 (EDY), Arg-187, Tyr-197, and Arg-234. Thr-82 contacts Mg(2+). Residues 198 to 268 (TPEELARIVK…IANRALAMLD (71 aa)) are small ATPAse domain (RuvB-S). Residues 271-356 (PQGFDLMDRK…RGNAENLFEE (86 aa)) are head domain (RuvB-H). 2 residues coordinate DNA: Arg-326 and Arg-331.

It belongs to the RuvB family. Homohexamer. Forms an RuvA(8)-RuvB(12)-Holliday junction (HJ) complex. HJ DNA is sandwiched between 2 RuvA tetramers; dsDNA enters through RuvA and exits via RuvB. An RuvB hexamer assembles on each DNA strand where it exits the tetramer. Each RuvB hexamer is contacted by two RuvA subunits (via domain III) on 2 adjacent RuvB subunits; this complex drives branch migration. In the full resolvosome a probable DNA-RuvA(4)-RuvB(12)-RuvC(2) complex forms which resolves the HJ.

Its subcellular location is the cytoplasm. It catalyses the reaction ATP + H2O = ADP + phosphate + H(+). Its function is as follows. The RuvA-RuvB-RuvC complex processes Holliday junction (HJ) DNA during genetic recombination and DNA repair, while the RuvA-RuvB complex plays an important role in the rescue of blocked DNA replication forks via replication fork reversal (RFR). RuvA specifically binds to HJ cruciform DNA, conferring on it an open structure. The RuvB hexamer acts as an ATP-dependent pump, pulling dsDNA into and through the RuvAB complex. RuvB forms 2 homohexamers on either side of HJ DNA bound by 1 or 2 RuvA tetramers; 4 subunits per hexamer contact DNA at a time. Coordinated motions by a converter formed by DNA-disengaged RuvB subunits stimulates ATP hydrolysis and nucleotide exchange. Immobilization of the converter enables RuvB to convert the ATP-contained energy into a lever motion, pulling 2 nucleotides of DNA out of the RuvA tetramer per ATP hydrolyzed, thus driving DNA branch migration. The RuvB motors rotate together with the DNA substrate, which together with the progressing nucleotide cycle form the mechanistic basis for DNA recombination by continuous HJ branch migration. Branch migration allows RuvC to scan DNA until it finds its consensus sequence, where it cleaves and resolves cruciform DNA. This is Holliday junction branch migration complex subunit RuvB from Polaromonas naphthalenivorans (strain CJ2).